We begin with the raw amino-acid sequence, 228 residues long: Geranylgeranylglyceryl phosphate synthase (228 aa).

Position 13 (lysine 13) interacts with sn-glycerol 1-phosphate. Residues aspartate 15 and threonine 41 each coordinate Mg(2+). Residues 159–164, glycine 189, and 209–210 each bind sn-glycerol 1-phosphate; these read YVEYSG and GN.

The protein belongs to the GGGP/HepGP synthase family. Group I subfamily. Mg(2+) is required as a cofactor.

The protein localises to the cytoplasm. The catalysed reaction is sn-glycerol 1-phosphate + (2E,6E,10E)-geranylgeranyl diphosphate = sn-3-O-(geranylgeranyl)glycerol 1-phosphate + diphosphate. It participates in membrane lipid metabolism; glycerophospholipid metabolism. Its function is as follows. Prenyltransferase that catalyzes the transfer of the geranylgeranyl moiety of geranylgeranyl diphosphate (GGPP) to the C3 hydroxyl of sn-glycerol-1-phosphate (G1P). This reaction is the first ether-bond-formation step in the biosynthesis of archaeal membrane lipids. This is Geranylgeranylglyceryl phosphate synthase from Methanosphaerula palustris (strain ATCC BAA-1556 / DSM 19958 / E1-9c).